We begin with the raw amino-acid sequence, 325 residues long: Putative aryl-alcohol dehydrogenase C750.01 (325 aa).

The protein belongs to the aldo/keto reductase family. Aldo/keto reductase 2 subfamily.

The polypeptide is Putative aryl-alcohol dehydrogenase C750.01 (Schizosaccharomyces pombe (strain 972 / ATCC 24843) (Fission yeast)).